Reading from the N-terminus, the 327-residue chain is Phenylalanine--tRNA ligase alpha subunit (327 aa).

Glu-252 is a binding site for Mg(2+).

Belongs to the class-II aminoacyl-tRNA synthetase family. Phe-tRNA synthetase alpha subunit type 1 subfamily. In terms of assembly, tetramer of two alpha and two beta subunits. Requires Mg(2+) as cofactor.

The protein localises to the cytoplasm. The enzyme catalyses tRNA(Phe) + L-phenylalanine + ATP = L-phenylalanyl-tRNA(Phe) + AMP + diphosphate + H(+). The chain is Phenylalanine--tRNA ligase alpha subunit from Shigella sonnei (strain Ss046).